A 690-amino-acid polypeptide reads, in one-letter code: Lipase 2 (690 aa).

A signal peptide spans 1–37 (MLRGQEERKYSIRKYSIGVVSVLAATMFVVSSHEAQA). Positions 52–71 (LNQPGEQGNAITSHQMQSGK) are enriched in polar residues. A disordered region spans residues 52-266 (LNQPGEQGNA…KPTDKNTDNK (215 aa)). The span at 72 to 81 (QLDDMHKENG) shows a compositional bias: basic and acidic residues. 3 stretches are compositionally biased toward polar residues: residues 82–114 (KSGT…NDNQ), 124–171 (SKQS…QPSI), and 185–206 (PTST…AQDA). 2 stretches are compositionally biased toward basic and acidic residues: residues 225–237 (IDAK…RQSE) and 257–266 (KPTDKNTDNK). Residues S412 and H645 each act as charge relay system in the active site.

It belongs to the AB hydrolase superfamily. Lipase family.

Its subcellular location is the secreted. It carries out the reaction a triacylglycerol + H2O = a diacylglycerol + a fatty acid + H(+). The sequence is that of Lipase 2 (lip2) from Staphylococcus aureus (strain NCTC 8325 / PS 47).